A 252-amino-acid chain; its full sequence is 14-3-3 protein homolog 1 (252 aa).

Belongs to the 14-3-3 family.

This is 14-3-3 protein homolog 1 from Schistosoma mansoni (Blood fluke).